Reading from the N-terminus, the 610-residue chain is Diol dehydratase-reactivating factor large subunit (610 aa).

11 to 13 is an ATP binding site; it reads NSS. Positions 105, 166, and 183 each coordinate Mg(2+). ATP is bound by residues 459-462, 557-558, and Arg-591; these read EEIK and GS.

It belongs to the DdrA/PduG family. As to quaternary structure, component of the DDR complex, a heterotetramer of DdrA(2)/DdrB(2). The DDR complex interacts with the diol dehydratase complex in the presence of ADP but not ATP. The cofactor is Mg(2+).

The catalysed reaction is ATP + H2O = ADP + phosphate + H(+). Its function is as follows. Large subunit of the diol dehydratase-reactivating factor (DDR), which reactivates suicidally inhibited adenosylcobalamin-dependent diol dehydratase (DD, pddA, pddB, pddC). DDR acts as a chaperone, reactivating inactivated DD holoenzyme in the presence of ATP, Mg(2+) and free adenosylcobalamin (AdoCbl), by mediating the exchange of the tightly bound damaged cofactor AdoCbl for a free intact one. Reactivation takes place in two steps: ADP-dependent cobalamin release, then ATP-dependent dissociation of the DD apoenzyme-DDR complex. DDR has weak ATPase activity which is required for DD reactivation. This subunit contains the adenosine nucleotide binding site. Activates glycerol-inactivated, O2-inactivated holoenzyme and inactivated enzyme-cyanocobalamin complex. Also reactivates glycerol-inactivated hologlycerol dehydratase, a DD isozyme. This Klebsiella michiganensis (strain ATCC 8724 / DSM 4798 / JCM 20051 / NBRC 3318 / NRRL B-199 / KCTC 1686 / BUCSAV 143 / CCM 1901) protein is Diol dehydratase-reactivating factor large subunit.